Here is a 950-residue protein sequence, read N- to C-terminus: MPVRRGHVAPQNTYLDTIIRKFEGQSRKFLIANAQMENCAIIYCNDGFCELFGYSRVEVMQRPCTCDFLTGPNTPSSAVSRLAQALLGAEECKVDILYYRKDASSFRCLVDVVPVKNEDGAVIMFILNFEDLAQLLAKSSSRSLTQRLLSHSFLGSEGSHSRPSGQGPGPGRGKYRTVSQIPQFTLNFVEFNLEKHRSGSTTEIEIIAPHKVVERTQNVTEKVTQVLSLGADVLPEYKLQAPRIHRGTILHYSPFKAVWDWLILLLVIYTAVFTPYSAAFLLSDQDESQRGTCGYTCSPLTVVDLIVDIMFVVDIVINFRTTYVNTNDEVVSHPRRIAVHYFKGWFLIDMVAAIPFDLLIFRTGSDETTTLIGLLKTARLLRLVRVARKLDRYSEYGAAVLFLLMCTFALIAHWLACIWYAIGNVERPYLEPKIGWLDSLGAQLGKQYNGSDPASGPSVQDKYVTALYFTFSSLTSVGFGNVSPNTNSEKVFSICVMLIGSLMYASIFGNVSAIIQRLYSGTARYHTQMLRVKEFIRFHQIPNPLRQRLEEYFQHAWSYTNGIDMNAVLKGFPECLQADICLHLHRALLQHCPAFRGASKGCLRALAVKFKTTHAPPGDTLVHLGDVLSTLYFISRGSIEILRDDVVVAILGKNDIFGEPASLHARPGKSSADVRALTYCDLHKIHRADLLEVLDMYPAFADTFWNKLEVTFNLRDADGGLQSTPRQAPGHQDPQGFFLNDSQSGAAPSLSISDTSALWPELLQQMPPSPPNPRQDLDCWHRELGFKLEQLQAQMNRLESRVSSDLSRILQLLQHPQGRPSYILGASASSDLASFPETSVTRSSESTLLVGHVPSAQTLSYGDLDDHIQTPRNFSPRTPHVAMAMDKTLVPSSEQEQPGGLLSPLASPLRPLEVPGLGGSRFPSLPEHLSSVPKQLEFQRHGSDPGFTRS.

At 1–261 the chain is on the cytoplasmic side; the sequence is MPVRRGHVAP…YSPFKAVWDW (261 aa). The 30-residue stretch at 41-70 folds into the PAS domain; the sequence is IIYCNDGFCELFGYSRVEVMQRPCTCDFLT. The PAC domain occupies 92–144; sequence CKVDILYYRKDASSFRCLVDVVPVKNEDGAVIMFILNFEDLAQLLAKSSSRSL. Residues 154 to 174 form a disordered region; it reads LGSEGSHSRPSGQGPGPGRGK. A helical transmembrane segment spans residues 262–282; the sequence is LILLLVIYTAVFTPYSAAFLL. The Extracellular portion of the chain corresponds to 283-298; it reads SDQDESQRGTCGYTCS. A helical transmembrane segment spans residues 299–319; the sequence is PLTVVDLIVDIMFVVDIVINF. The Cytoplasmic portion of the chain corresponds to 320 to 340; it reads RTTYVNTNDEVVSHPRRIAVH. A helical transmembrane segment spans residues 341 to 361; it reads YFKGWFLIDMVAAIPFDLLIF. Residues 362-370 are Extracellular-facing; the sequence is RTGSDETTT. A helical; Voltage-sensor transmembrane segment spans residues 371–391; that stretch reads LIGLLKTARLLRLVRVARKLD. The Cytoplasmic segment spans residues 392 to 398; the sequence is RYSEYGA. Residues 399–419 form a helical membrane-spanning segment; sequence AVLFLLMCTFALIAHWLACIW. The Extracellular segment spans residues 420 to 463; sequence YAIGNVERPYLEPKIGWLDSLGAQLGKQYNGSDPASGPSVQDKY. The segment at residues 464–484 is an intramembrane region (pore-forming); sequence VTALYFTFSSLTSVGFGNVSP. Positions 476–481 match the Selectivity filter motif; sequence SVGFGN. Residues 485–490 are Extracellular-facing; the sequence is NTNSEK. The helical transmembrane segment at 491–511 threads the bilayer; sequence VFSICVMLIGSLMYASIFGNV. Residues 512 to 950 lie on the Cytoplasmic side of the membrane; sequence SAIIQRLYSG…HGSDPGFTRS (439 aa). The tract at residues 594–694 is cNMP-binding domain; it reads AFRGASKGCL…IHRADLLEVL (101 aa). 2 disordered regions span residues 719 to 750 and 890 to 950; these read GGLQSTPRQAPGHQDPQGFFLNDSQSGAAPSL and VPSS…FTRS. Residues 740–750 show a composition bias toward polar residues; the sequence is NDSQSGAAPSL. Low complexity predominate over residues 898–912; sequence PGGLLSPLASPLRPL.

The protein belongs to the potassium channel family. H (Eag) (TC 1.A.1.20) subfamily. Kv11.2/KCNH6 sub-subfamily. In terms of assembly, the potassium channel is probably composed of a homo- or heterotetrameric complex of pore-forming alpha subunits that can associate only within their subfamily. As to expression, highly expressed in celiac and superior mesenteric ganglia, but not detected in brain or in heart. Detected at low levels in retina. Also found in pituitary. Also found in the olfactory bulb (granular and mitral cell layers).

The protein resides in the cell membrane. The enzyme catalyses K(+)(in) = K(+)(out). In terms of biological role, pore-forming (alpha) subunit of voltage-gated inwardly rectifying potassium channel. Characterized by unusual gating kinetics by producing relatively small outward currents during membrane depolarization and large inward currents during subsequent repolarization which reflect a rapid inactivation during depolarization and quick recovery from inactivation but slow deactivation (closing) during repolarization. Activates even more slowly than KCNH2. The protein is Voltage-gated inwardly rectifying potassium channel KCNH6 of Rattus norvegicus (Rat).